Consider the following 201-residue polypeptide: 3-isopropylmalate dehydratase small subunit 1 (201 aa).

This sequence belongs to the LeuD family. LeuD type 1 subfamily. In terms of assembly, heterodimer of LeuC and LeuD.

The catalysed reaction is (2R,3S)-3-isopropylmalate = (2S)-2-isopropylmalate. Its pathway is amino-acid biosynthesis; L-leucine biosynthesis; L-leucine from 3-methyl-2-oxobutanoate: step 2/4. Its function is as follows. Catalyzes the isomerization between 2-isopropylmalate and 3-isopropylmalate, via the formation of 2-isopropylmaleate. This Salmonella typhimurium (strain LT2 / SGSC1412 / ATCC 700720) protein is 3-isopropylmalate dehydratase small subunit 1.